We begin with the raw amino-acid sequence, 396 residues long: Elongation factor Tu 1 (396 aa).

Residues Lys10–Glu206 enclose the tr-type G domain. The G1 stretch occupies residues Gly19–Thr26. Position 19-26 (Gly19–Thr26) interacts with GTP. Position 26 (Thr26) interacts with Mg(2+). Residues Gly60–Asn64 form a G2 region. The segment at Asp81–Gly84 is G3. Residues Asp81 to His85 and Asn136 to Asp139 each bind GTP. The G4 stretch occupies residues Asn136 to Asp139. Residues Ser174–Lys176 are G5.

This sequence belongs to the TRAFAC class translation factor GTPase superfamily. Classic translation factor GTPase family. EF-Tu/EF-1A subfamily. As to quaternary structure, monomer.

It is found in the cytoplasm. It carries out the reaction GTP + H2O = GDP + phosphate + H(+). In terms of biological role, GTP hydrolase that promotes the GTP-dependent binding of aminoacyl-tRNA to the A-site of ribosomes during protein biosynthesis. The protein is Elongation factor Tu 1 of Methylobacillus flagellatus (strain ATCC 51484 / DSM 6875 / VKM B-1610 / KT).